Reading from the N-terminus, the 396-residue chain is Flavohemoprotein (396 aa).

The Globin domain occupies 1-136; it reads MLDAQTIATV…LANVFINREA (136 aa). Histidine 85 contributes to the heme b binding site. Residues tyrosine 95 and glutamate 135 each act as charge relay system in the active site. Positions 147-396 are reductase; that stretch reads GGWEGTRDFR…YECFGPHKVL (250 aa). An FAD-binding FR-type domain is found at 150–255; sequence EGTRDFRIVA…VAPAGDFFMA (106 aa). Residues tyrosine 188 and 204-207 contribute to the FAD site; that span reads RQYS. 268–273 provides a ligand contact to NADP(+); it reads GVGQTP. FAD is bound at residue 389–392; the sequence is CFGP.

This sequence belongs to the globin family. Two-domain flavohemoproteins subfamily. The protein in the C-terminal section; belongs to the flavoprotein pyridine nucleotide cytochrome reductase family. Heme b is required as a cofactor. Requires FAD as cofactor.

The catalysed reaction is 2 nitric oxide + NADPH + 2 O2 = 2 nitrate + NADP(+) + H(+). It carries out the reaction 2 nitric oxide + NADH + 2 O2 = 2 nitrate + NAD(+) + H(+). In terms of biological role, is involved in NO detoxification in an aerobic process, termed nitric oxide dioxygenase (NOD) reaction that utilizes O(2) and NAD(P)H to convert NO to nitrate, which protects the bacterium from various noxious nitrogen compounds. Therefore, plays a central role in the inducible response to nitrosative stress. This Shigella flexneri protein is Flavohemoprotein.